A 239-amino-acid chain; its full sequence is Thymidylate kinase (239 aa).

Residue 10–17 (GINGVGKS) participates in ATP binding.

Belongs to the thymidylate kinase family.

It carries out the reaction dTMP + ATP = dTDP + ADP. The protein operates within pyrimidine metabolism; dTTP biosynthesis. In terms of biological role, catalyzes the conversion of dTMP to dTDP. This is Thymidylate kinase (TMK) from African swine fever virus (isolate Warthog/Namibia/Wart80/1980) (ASFV).